A 437-amino-acid chain; its full sequence is Proton/glutamate-aspartate symporter (437 aa).

At 1 to 5 the chain is on the cytoplasmic side; sequence MKNIK. Residues 6–26 form a helical membrane-spanning segment; sequence FSLAWQILFAMVLGILLGSYL. Residues 27-50 are Periplasmic-facing; the sequence is HYHSDSRDWLVVNLLSPAGDIFIH. The helical transmembrane segment at 51 to 71 threads the bilayer; that stretch reads LIKMIVVPIVISTLVVGIAGV. The Cytoplasmic segment spans residues 72–84; sequence GDAKQLGRIGAKT. The helical transmembrane segment at 85 to 105 threads the bilayer; sequence IIYFEVITTVAIILGITLANV. Residues 106 to 159 lie on the Periplasmic side of the membrane; sequence FQPGAGVDMSQLATVDISKYQSTTEAVQSSSHGIMGTILSLVPTNIVASMAKGE. A helical transmembrane segment spans residues 160 to 180; sequence MLPIIFFSVLFGLGLSSLPAT. The Cytoplasmic portion of the chain corresponds to 181–210; that stretch reads HREPLVTVFRSISETMFKVTHMVMRYAPVG. A helical membrane pass occupies residues 211-231; the sequence is VFALIAVTVANFGFSSLWPLA. Lys232 is a topological domain (periplasmic). A helical membrane pass occupies residues 233-253; it reads LVLLVHFAILFFALVVLGIVA. Over 254–292 the chain is Cytoplasmic; that stretch reads RLCGLSVWILIRILKDELILAYSTASSESVLPRIIEKME. The chain crosses the membrane as a helical span at residues 293-313; it reads AYGAPVSITSFVVPTGYSFNL. Residues 314 to 324 lie on the Periplasmic side of the membrane; the sequence is DGSTLYQSIAA. The chain crosses the membrane as a helical span at residues 325-345; sequence IFIAQLYGIDLSIWQEIILVL. Residues 346-361 are Cytoplasmic-facing; that stretch reads TLMVTSKGIAGVPGVS. The chain crosses the membrane as a helical span at residues 362–382; the sequence is FVVLLATLGSVGIPLEGLAFI. Topologically, residues 383 to 387 are periplasmic; that stretch reads AGVDR. A helical transmembrane segment spans residues 388 to 408; that stretch reads ILDMARTALNVVGNALAVLVI. Over 409–437 the chain is Cytoplasmic; sequence AKWEHKFDRKKALAYEREVLGKFDKTADQ.

It belongs to the dicarboxylate/amino acid:cation symporter (DAACS) (TC 2.A.23) family. GltP subfamily.

Its subcellular location is the cell inner membrane. Glutamate uptake is inhibited by L-cysteate and beta-hydroxyaspartate. Inhibited by the uncoupler carbonylcyanide m-chlorophenylhydrazone (CCCP). Catalyzes the proton-dependent, binding-protein-independent transport of glutamate and aspartate. In Escherichia coli (strain K12), this protein is Proton/glutamate-aspartate symporter.